Here is a 195-residue protein sequence, read N- to C-terminus: Imidazoleglycerol-phosphate dehydratase (195 aa).

The protein belongs to the imidazoleglycerol-phosphate dehydratase family.

It is found in the cytoplasm. It carries out the reaction D-erythro-1-(imidazol-4-yl)glycerol 3-phosphate = 3-(imidazol-4-yl)-2-oxopropyl phosphate + H2O. It participates in amino-acid biosynthesis; L-histidine biosynthesis; L-histidine from 5-phospho-alpha-D-ribose 1-diphosphate: step 6/9. The polypeptide is Imidazoleglycerol-phosphate dehydratase (Polynucleobacter necessarius subsp. necessarius (strain STIR1)).